A 142-amino-acid chain; its full sequence is Required for drug-induced death protein 1 (142 aa).

Disordered regions lie at residues 1–32 (MTVG…DEEA) and 46–66 (EAAA…TRGA). The chain crosses the membrane as a helical span at residues 116–138 (VVIGLQGFAAAYSAPFAVATSVV).

The protein localises to the membrane. In terms of biological role, regulates drug efflux through modulation of ABCB1 localization and activity. This Homo sapiens (Human) protein is Required for drug-induced death protein 1.